A 2287-amino-acid polypeptide reads, in one-letter code: Protein Ycf2 (2287 aa).

1641–1648 serves as a coordination point for ATP; sequence GSIGTGRS.

This sequence belongs to the Ycf2 family.

The protein localises to the plastid. It localises to the chloroplast stroma. In terms of biological role, probable ATPase of unknown function. Its presence in a non-photosynthetic plant (Epifagus virginiana) and experiments in tobacco indicate that it has an essential function which is probably not related to photosynthesis. The chain is Protein Ycf2 from Lepidium virginicum (Virginia pepperweed).